The primary structure comprises 224 residues: CMRF35-like molecule 6 (224 aa).

The N-terminal stretch at 1 to 20 is a signal peptide; sequence MTARAWASWRSSALLLLLVP. The Extracellular segment spans residues 21–183; it reads GYFPLSHPMT…HPGSLFSNVR (163 aa). The Ig-like V-type domain occupies 22 to 130; that stretch reads YFPLSHPMTV…HDPIVEVEVS (109 aa). 2 cysteine pairs are disulfide-bonded: Cys43–Cys110 and Cys57–Cys65. N-linked (GlcNAc...) asparagine glycans are attached at residues Asn90 and Asn99. The span at 136-151 shows a compositional bias: polar residues; sequence TTTASSPQSSMGTSGP. Residues 136–174 form a disordered region; that stretch reads TTTASSPQSSMGTSGPPTKLPVHTWPSVTRKDSPEPSPH. The chain crosses the membrane as a helical span at residues 184–204; it reads FLLLVLLELPLLLSMLGAVLW. The Cytoplasmic portion of the chain corresponds to 205-224; that stretch reads VNRPQRSSRSRQNWPKGENQ.

The protein belongs to the CD300 family. In terms of tissue distribution, present on the surface of monocytes, neutrophils, a proportion of peripheral blood T- and B-lymphocytes and lymphocytic cell lines.

The protein localises to the cell membrane. The sequence is that of CMRF35-like molecule 6 (CD300C) from Homo sapiens (Human).